A 489-amino-acid polypeptide reads, in one-letter code: Metalloreductase STEAP2 (489 aa).

NADP(+)-binding positions include 37–40 (SGDF), 59–60 (SR), 92–99 (IHREHYTS), asparagine 117, and alanine 150. FAD contacts are provided by tryptophan 151 and aspartate 159. The chain crosses the membrane as a helical span at residues 207-227 (LFTLWRGPVVVAISLATFFFL). Fe(3+) is bound at residue tyrosine 228. The helical transmembrane segment at 258-278 (LPIVAITLLSLVYLAGLLAAA) threads the bilayer. Residues 258-406 (LPIVAITLLS…LGYVALLITT (149 aa)) form the Ferric oxidoreductase domain. FAD contacts are provided by glutamine 280 and arginine 301. 4 consecutive transmembrane segments (helical) span residues 304–324 (LGLL…CLPM), 358–378 (MYIS…VTSI), 392–412 (FIQS…VLIY), and 431–451 (FVLA…LLLP). Residue histidine 315 participates in heme b binding. Tyrosine 318 contributes to the Fe(3+) binding site. FAD contacts are provided by serine 377 and glutamine 394. Histidine 408 provides a ligand contact to heme b. Serine 482 carries the phosphoserine modification.

This sequence belongs to the STEAP family. Requires FAD as cofactor. Heme b serves as cofactor.

Its subcellular location is the cell membrane. The protein resides in the endosome membrane. The catalysed reaction is 2 Fe(2+) + NADP(+) + H(+) = 2 Fe(3+) + NADPH. It catalyses the reaction 2 Cu(+) + NADP(+) + H(+) = 2 Cu(2+) + NADPH. Its function is as follows. Integral membrane protein that functions as a NADPH-dependent ferric-chelate reductase, using NADPH from one side of the membrane to reduce a Fe(3+) chelate that is bound on the other side of the membrane. Mediates sequential transmembrane electron transfer from NADPH to FAD and onto heme, and finally to the Fe(3+) chelate. Can also reduce Cu(2+) to Cu(1+). This chain is Metalloreductase STEAP2 (Steap2), found in Mus musculus (Mouse).